Here is a 114-residue protein sequence, read N- to C-terminus: Non-specific lipid-transfer protein 1 (114 aa).

Positions M1–A25 are cleaved as a signal peptide. 4 disulfide bridges follow: C29–C76, C39–C53, C54–C99, and C74–C113.

This sequence belongs to the plant LTP family. In terms of tissue distribution, expressed in seeds and, at very low levels, in pulp of fruit (at protein level).

Its function is as follows. Plant non-specific lipid-transfer proteins transfer phospholipids as well as galactolipids across membranes. May play a role in wax or cutin deposition in the cell walls of expanding epidermal cells and certain secretory tissues. The sequence is that of Non-specific lipid-transfer protein 1 from Actinidia chinensis var. chinensis (Chinese soft-hair kiwi).